Consider the following 644-residue polypeptide: MHWTPEHAQPLNQWPEQHLDVSSTTPSPAHKLELPPGGRQRCHYAWAHDDISALTASNLLKRYAEKYSGVLDYERPGLGSYGDAAFLNGAKGDPEPWPGPEPPYPLASLHEGLPGAKAAGAGGSAGLGGSPVVAGNLTEPLYTGNACGGPSAATEYAAGYGGGYLASGYCAQTSAALAPPPPPALLQPAPPPGYGPSAPLYNYPAAGYAAQPGYGALPPPAAPPAPYLPSGLAAPTPLPAPAPPRPAPYGFPAAAEGVSLKRKAVDEGAEARYRKYAYEPAKAPAADGASYPAADDTECRGNGFRSKPPGATEDGTGKYGGGGPLKVLGSPAYAPQLEPFDKFPERVPAAHGGFAEPSGEPAKGVDPGALELVSSKMVDCGPPVQWADVAGQGALKAALEEELLWPLLRPPACPGSALPPRTVLFFGPRGCGKALLGRCLATRLGATLLRLRGAGLAASGAVEGARLLQAAFAAARCRPPAVLLISELDALLPARDDGASLRAPLLTCLDGSCGARADGVLVVGTTSRPAALDEATRRRFALRFYVALPDGAARGQILQRALAQQGCALNERELAALVQGTQGFSGGELGQLCQQAAAEAGISGLQRPLSYKDVEAALAKVGSRAPSKELDSLVEWDKMYGSGH.

Disordered regions lie at residues 1-36 (MHWT…ELPP) and 285-323 (AADG…GGGG). Positions 10 to 27 (PLNQWPEQHLDVSSTTPS) are enriched in polar residues. Positions 285-294 (AADGASYPAA) are enriched in low complexity. Residues alanine 390 and 430–435 (GCGKAL) contribute to the ATP site.

The protein belongs to the AAA ATPase family. Mg(2+) is required as a cofactor.

It localises to the cytoplasm. It is found in the cell cortex. The enzyme catalyses ATP + H2O = ADP + phosphate + H(+). Its function is as follows. Microtubule-severing enzyme that negatively regulates cell migration and wound healing. In migrating cells, targets dynamic microtubules (MTs) at the leading edge and severs them, thereby suppressing motility. Microtubule severing releases ARHGEF2 which activates RHOA, which in turn regulates focal ahesion turnover via focal adhesion kinase, as opposed to F-actin polymerization, to suppress cell motility. Negative regulator of axon regeneration that suppresses axonal growth by selectively severing dynamic MTs in the distal axon shaft and growth cone. Contributes to proper cell branching during endothelial and neuronal development. This is Fidgetin-like protein 2 (Fignl2) from Mus musculus (Mouse).